A 195-amino-acid chain; its full sequence is ATP-dependent Clp protease proteolytic subunit (195 aa).

S96 (nucleophile) is an active-site residue. The active site involves H121.

This sequence belongs to the peptidase S14 family. In terms of assembly, fourteen ClpP subunits assemble into 2 heptameric rings which stack back to back to give a disk-like structure with a central cavity, resembling the structure of eukaryotic proteasomes.

The protein localises to the cytoplasm. It catalyses the reaction Hydrolysis of proteins to small peptides in the presence of ATP and magnesium. alpha-casein is the usual test substrate. In the absence of ATP, only oligopeptides shorter than five residues are hydrolyzed (such as succinyl-Leu-Tyr-|-NHMec, and Leu-Tyr-Leu-|-Tyr-Trp, in which cleavage of the -Tyr-|-Leu- and -Tyr-|-Trp bonds also occurs).. Its function is as follows. Cleaves peptides in various proteins in a process that requires ATP hydrolysis. Has a chymotrypsin-like activity. Plays a major role in the degradation of misfolded proteins. This Elusimicrobium minutum (strain Pei191) protein is ATP-dependent Clp protease proteolytic subunit.